The following is a 444-amino-acid chain: Ribulose bisphosphate carboxylase large chain (444 aa).

Lysine 7 carries the post-translational modification N6,N6,N6-trimethyllysine. Substrate-binding residues include asparagine 116 and threonine 166. The Proton acceptor role is filled by lysine 168. Position 170 (lysine 170) interacts with substrate. Residues lysine 194, aspartate 196, and glutamate 197 each contribute to the Mg(2+) site. Lysine 194 is subject to N6-carboxylysine. The active-site Proton acceptor is the histidine 287. 3 residues coordinate substrate: arginine 288, histidine 320, and serine 372.

This sequence belongs to the RuBisCO large chain family. Type I subfamily. In terms of assembly, heterohexadecamer of 8 large chains and 8 small chains; disulfide-linked. The disulfide link is formed within the large subunit homodimers. The cofactor is Mg(2+). Post-translationally, the disulfide bond which can form in the large chain dimeric partners within the hexadecamer appears to be associated with oxidative stress and protein turnover.

The protein localises to the plastid. Its subcellular location is the chloroplast. The catalysed reaction is 2 (2R)-3-phosphoglycerate + 2 H(+) = D-ribulose 1,5-bisphosphate + CO2 + H2O. It carries out the reaction D-ribulose 1,5-bisphosphate + O2 = 2-phosphoglycolate + (2R)-3-phosphoglycerate + 2 H(+). In terms of biological role, ruBisCO catalyzes two reactions: the carboxylation of D-ribulose 1,5-bisphosphate, the primary event in carbon dioxide fixation, as well as the oxidative fragmentation of the pentose substrate in the photorespiration process. Both reactions occur simultaneously and in competition at the same active site. The polypeptide is Ribulose bisphosphate carboxylase large chain (Watsonia angusta).